The following is a 363-amino-acid chain: Neurogenic differentiation factor 2 (363 aa).

Positions methionine 1–glutamate 116 are disordered. Residues glutamate 28–aspartate 44 show a composition bias toward basic and acidic residues. Over residues alanine 64 to aspartate 83 the composition is skewed to acidic residues. Residues proline 87–threonine 98 are compositionally biased toward basic residues. The Nuclear localization signal motif lies at lysine 93–proline 99. Positions valine 107 to leucine 159 constitute a bHLH domain.

Efficient DNA binding requires dimerization with another bHLH protein. In terms of tissue distribution, in adult, expressed strongly in brain and more weakly in skin, muscle, eye and ovary.

The protein resides in the nucleus. Transcriptional regulator. Appears to mediate neuronal differentiation. In Danio rerio (Zebrafish), this protein is Neurogenic differentiation factor 2.